The primary structure comprises 360 residues: UDP-3-O-acylglucosamine N-acyltransferase (360 aa).

His-256 acts as the Proton acceptor in catalysis. Residues 341–360 form a disordered region; sequence EGSGAETAARPDDDRDEGRG. Residues 349–360 show a composition bias toward basic and acidic residues; sequence ARPDDDRDEGRG.

It belongs to the transferase hexapeptide repeat family. LpxD subfamily. As to quaternary structure, homotrimer.

The enzyme catalyses a UDP-3-O-[(3R)-3-hydroxyacyl]-alpha-D-glucosamine + a (3R)-hydroxyacyl-[ACP] = a UDP-2-N,3-O-bis[(3R)-3-hydroxyacyl]-alpha-D-glucosamine + holo-[ACP] + H(+). It functions in the pathway bacterial outer membrane biogenesis; LPS lipid A biosynthesis. Functionally, catalyzes the N-acylation of UDP-3-O-acylglucosamine using 3-hydroxyacyl-ACP as the acyl donor. Is involved in the biosynthesis of lipid A, a phosphorylated glycolipid that anchors the lipopolysaccharide to the outer membrane of the cell. The chain is UDP-3-O-acylglucosamine N-acyltransferase from Rhodopseudomonas palustris (strain TIE-1).